We begin with the raw amino-acid sequence, 213 residues long: Pyrrolidone-carboxylate peptidase (213 aa).

Residues Glu-78, Cys-141, and His-165 contribute to the active site.

Belongs to the peptidase C15 family. As to quaternary structure, homotetramer.

The protein resides in the cytoplasm. The catalysed reaction is Release of an N-terminal pyroglutamyl group from a polypeptide, the second amino acid generally not being Pro.. In terms of biological role, removes 5-oxoproline from various penultimate amino acid residues except L-proline. In Finegoldia magna (strain ATCC 29328 / DSM 20472 / WAL 2508) (Peptostreptococcus magnus), this protein is Pyrrolidone-carboxylate peptidase.